The sequence spans 813 residues: Putative ATPase, plasma membrane-like (813 aa).

The Cytoplasmic portion of the chain corresponds to 1-66; it reads MATGDSLEDI…KKKEHITLRF (66 aa). A helical transmembrane segment spans residues 67–86; the sequence is FALMFKPLSWVIQAAAIMAM. Residues 87-94 lie on the Extracellular side of the membrane; that stretch reads LFANGDGR. The helical transmembrane segment at 95 to 115 threads the bilayer; that stretch reads QLFLGIVCLLIVNTIICYLKE. Residues 116–245 lie on the Cytoplasmic side of the membrane; the sequence is DDAANVVAMA…GHFRKVVTEI (130 aa). Residues 246–266 form a helical membrane-spanning segment; the sequence is ENLCVISIAIGISIEVIVMYW. Topologically, residues 267–275 are extracellular; it reads IQRRNFSDV. Residues 276-293 traverse the membrane as a helical segment; sequence INNLLVLVIGGIPLAMPT. Residues 294-555 are Cytoplasmic-facing; the sequence is VLYVIMVTGS…ASRAILQQMK (262 aa). D331 (4-aspartylphosphate intermediate) is an active-site residue. Mg(2+) is bound by residues D500 and D504. A helical membrane pass occupies residues 556 to 577; the sequence is HYTIYAVSITIRVVFGFMFIAL. Residues 578-582 are Extracellular-facing; that stretch reads IWKFD. The chain crosses the membrane as a helical span at residues 583–605; the sequence is FSPFMVLAIALLNEETTKAITMD. Topologically, residues 606–622 are cytoplasmic; sequence NVTNPSPTPDSLKLKEI. The helical transmembrane segment at 623–643 threads the bilayer; the sequence is FATGVVYGSYMALITVVFFWA. Residues 644-664 lie on the Extracellular side of the membrane; the sequence is AYRTDIFPRTFHVRDLRGNEA. Residues 665-685 form a helical membrane-spanning segment; the sequence is EMMCALYLQVSIMSQALFFVI. At 686-697 the chain is on the cytoplasmic side; sequence QSRSWFFVERPG. The helical transmembrane segment at 698 to 718 threads the bilayer; it reads ELLFLSFVTVQTIATTLAVYA. The Extracellular portion of the chain corresponds to 719-726; it reads SWETARIE. Residues 727–747 form a helical membrane-spanning segment; sequence GIGWSWAGVIWLYNIIFFFPL. The Cytoplasmic portion of the chain corresponds to 748-813; it reads DIMKFGIRYI…SQDLRGVGWV (66 aa). S776 bears the Phosphoserine mark.

The protein belongs to the cation transport ATPase (P-type) (TC 3.A.3) family. Type IIIA subfamily.

It localises to the membrane. In Arabidopsis thaliana (Mouse-ear cress), this protein is Putative ATPase, plasma membrane-like.